The following is a 449-amino-acid chain: MFS acetylaranotin efflux transporter ataA (449 aa).

A run of 7 helical transmembrane segments spans residues 6-26, 45-65, 67-87, 115-135, 155-175, 182-202, and 227-247; these read SVYVWLTVVVKDNTIIATAIP, YLLVTCMFQLIFGKLYGYFPI, WVFLAAIIIFEIGSAVCGAAP, FYINLPIGAVVIVVLLQFLHV, LGVVTFLPAIVCLLLALQWGG, NGRIIALFVLAGVLLIAFLAI, and LFMTLFAGAYFTIIYYLPIWF. An N-linked (GlcNAc...) asparagine glycan is attached at Asn-252. A run of 5 helical transmembrane segments spans residues 260–280, 287–307, 321–341, 349–369, and 420–440; these read IMCLPLMLSMVIFSFVAGGGV, VPFFYIATVLAAAGAGLMTTF, VLLGSGVGMGIQLPIIAVQAV, VGTAILTFCQTFGGAIFVSVA, and ALVSAWYLAVALFSVAVLGAV.

This sequence belongs to the major facilitator superfamily.

The protein localises to the cell membrane. In terms of biological role, efflux pump that may provide the dual role of acetylaranotin export and self-protection by allowing the fungus to evade the harmful effect of its own acetylaranotin production. In Aspergillus terreus (strain NIH 2624 / FGSC A1156), this protein is MFS acetylaranotin efflux transporter ataA.